Consider the following 235-residue polypeptide: Thiamine import ATP-binding protein ThiQ (235 aa).

In terms of domain architecture, ABC transporter spans 2–230; it reads LKLIDITWLY…QASASALLGI (229 aa). An ATP-binding site is contributed by 32-39; that stretch reads GPSGAGKS.

Belongs to the ABC transporter superfamily. Thiamine importer (TC 3.A.1.19.1) family. The complex is composed of two ATP-binding proteins (ThiQ), two transmembrane proteins (ThiP) and a solute-binding protein (ThiB).

Its subcellular location is the cell inner membrane. The catalysed reaction is thiamine(out) + ATP + H2O = thiamine(in) + ADP + phosphate + H(+). Part of the ABC transporter complex ThiBPQ involved in thiamine import. Responsible for energy coupling to the transport system. The sequence is that of Thiamine import ATP-binding protein ThiQ from Salmonella choleraesuis (strain SC-B67).